A 331-amino-acid chain; its full sequence is Putative phosphoribosylaminoimidazole-succinocarboxamide synthase (331 aa).

Belongs to the SAICAR synthetase family. Highly divergent.

It catalyses the reaction 5-amino-1-(5-phospho-D-ribosyl)imidazole-4-carboxylate + L-aspartate + ATP = (2S)-2-[5-amino-1-(5-phospho-beta-D-ribosyl)imidazole-4-carboxamido]succinate + ADP + phosphate + 2 H(+). It participates in purine metabolism; IMP biosynthesis via de novo pathway; 5-amino-1-(5-phospho-D-ribosyl)imidazole-4-carboxamide from 5-amino-1-(5-phospho-D-ribosyl)imidazole-4-carboxylate: step 1/2. This chain is Putative phosphoribosylaminoimidazole-succinocarboxamide synthase (purC), found in Archaeoglobus fulgidus (strain ATCC 49558 / DSM 4304 / JCM 9628 / NBRC 100126 / VC-16).